Reading from the N-terminus, the 631-residue chain is Phosphomethylpyrimidine synthase (631 aa).

Substrate contacts are provided by residues asparagine 239, methionine 268, tyrosine 297, histidine 333, 353–355, 394–397, and glutamate 433; these read SRG and DGLR. Residue histidine 437 coordinates Zn(2+). Substrate is bound at residue tyrosine 460. Histidine 501 is a binding site for Zn(2+). Positions 581, 584, and 589 each coordinate [4Fe-4S] cluster.

The protein belongs to the ThiC family. As to quaternary structure, homodimer. [4Fe-4S] cluster is required as a cofactor.

The enzyme catalyses 5-amino-1-(5-phospho-beta-D-ribosyl)imidazole + S-adenosyl-L-methionine = 4-amino-2-methyl-5-(phosphooxymethyl)pyrimidine + CO + 5'-deoxyadenosine + formate + L-methionine + 3 H(+). Its pathway is cofactor biosynthesis; thiamine diphosphate biosynthesis. Its function is as follows. Catalyzes the synthesis of the hydroxymethylpyrimidine phosphate (HMP-P) moiety of thiamine from aminoimidazole ribotide (AIR) in a radical S-adenosyl-L-methionine (SAM)-dependent reaction. The polypeptide is Phosphomethylpyrimidine synthase (Salmonella agona (strain SL483)).